Reading from the N-terminus, the 405-residue chain is Phosphopentomutase (405 aa).

Asp10, Asp297, His302, Asp338, His339, and His350 together coordinate Mn(2+).

Belongs to the phosphopentomutase family. It depends on Mn(2+) as a cofactor.

The protein resides in the cytoplasm. It carries out the reaction 2-deoxy-alpha-D-ribose 1-phosphate = 2-deoxy-D-ribose 5-phosphate. The catalysed reaction is alpha-D-ribose 1-phosphate = D-ribose 5-phosphate. Its pathway is carbohydrate degradation; 2-deoxy-D-ribose 1-phosphate degradation; D-glyceraldehyde 3-phosphate and acetaldehyde from 2-deoxy-alpha-D-ribose 1-phosphate: step 1/2. Its function is as follows. Isomerase that catalyzes the conversion of deoxy-ribose 1-phosphate (dRib-1-P) and ribose 1-phosphate (Rib-1-P) to deoxy-ribose 5-phosphate (dRib-5-P) and ribose 5-phosphate (Rib-5-P), respectively. The protein is Phosphopentomutase of Pseudoalteromonas translucida (strain TAC 125).